The primary structure comprises 486 residues: 3-dehydroshikimate dehydratase (486 aa).

The catalysed reaction is 3-dehydroshikimate = 3,4-dihydroxybenzoate + H2O. It functions in the pathway aromatic compound metabolism; 3,4-dihydroxybenzoate biosynthesis; 3,4-dihydroxybenzoate from 3-dehydroquinate: step 2/2. Functionally, converts dehydroshikimate to protocatechuate. The chain is 3-dehydroshikimate dehydratase (quiC) from Acinetobacter baylyi (strain ATCC 33305 / BD413 / ADP1).